A 443-amino-acid chain; its full sequence is Leucine/methionine racemase (443 aa).

Pyridoxal 5'-phosphate-binding positions include 110-111 (GS) and Q247. At K273 the chain carries N6-(pyridoxal phosphate)lysine. T302 contributes to the pyridoxal 5'-phosphate binding site.

The protein belongs to the class-III pyridoxal-phosphate-dependent aminotransferase family. Pyridoxal 5'-phosphate is required as a cofactor.

The enzyme catalyses L-leucine = D-leucine. The catalysed reaction is L-methionine = D-methionine. Its activity is regulated as follows. Activity is strongly inhibited by several metal ions, including Co(2+), Zn(2+), Ni(2+), Cu(2+) and Fe(3+), and nonsubstrate amino acids such as L-arginine and L-lysine. Activity is completely abolished in the presence of hydroxylamine, an inhibitor of pyridoxal phosphate-dependent enzymes. Its function is as follows. Amino acid racemase with moderate substrate specificity. Is primarily active toward leucine, which is the preferred substrate, and methionine. Also exhibits lower levels of activity toward phenylalanine, alanine and serine. This is Leucine/methionine racemase from Thermococcus litoralis (strain ATCC 51850 / DSM 5473 / JCM 8560 / NS-C).